A 33-amino-acid chain; its full sequence is Cytochrome b6-f complex subunit 8 (33 aa).

The helical transmembrane segment at 2–22 (LFTLAWASLAAVFSFSIAMVV) threads the bilayer.

The protein belongs to the PetN family. In terms of assembly, the 4 large subunits of the cytochrome b6-f complex are cytochrome b6, subunit IV (17 kDa polypeptide, PetD), cytochrome f and the Rieske protein, while the 4 small subunits are PetG, PetL, PetM and PetN. The complex functions as a dimer.

The protein localises to the cellular thylakoid membrane. In terms of biological role, component of the cytochrome b6-f complex, which mediates electron transfer between photosystem II (PSII) and photosystem I (PSI), cyclic electron flow around PSI, and state transitions. The polypeptide is Cytochrome b6-f complex subunit 8 (Prochlorococcus marinus (strain MIT 9303)).